The chain runs to 668 residues: Transketolase (668 aa).

A substrate-binding site is contributed by histidine 28. Residues histidine 68 and 116 to 118 (GPL) each bind thiamine diphosphate. Aspartate 157 provides a ligand contact to Mg(2+). The thiamine diphosphate site is built by glycine 158 and asparagine 187. The Mg(2+) site is built by asparagine 187 and isoleucine 189. Substrate is bound by residues histidine 263, arginine 358, and serine 385. Histidine 263 contacts thiamine diphosphate. The active-site Proton donor is the glutamate 412. Residue phenylalanine 438 participates in thiamine diphosphate binding. Histidine 462, aspartate 470, histidine 474, and arginine 521 together coordinate substrate.

Belongs to the transketolase family. Homodimer. It depends on Mg(2+) as a cofactor. Thiamine diphosphate serves as cofactor.

The catalysed reaction is D-sedoheptulose 7-phosphate + D-glyceraldehyde 3-phosphate = aldehydo-D-ribose 5-phosphate + D-xylulose 5-phosphate. Functionally, catalyzes the transfer of a two-carbon ketol group from a ketose donor to an aldose acceptor, likely via a covalent intermediate with the cofactor thiamine pyrophosphate. Can use L-erythrulose as donor and D-ribose-5-phosphate as acceptor substrates, forming glycolaldehyde and D-sedoheptulose-7-phosphate. For synthetic purposes, is able to use hydroxypyruvate (HPA) as donor substrate, making the reaction irreversible due to the release of carbon dioxide, and various aldehydes as acceptor substrates, which leads to the corresponding ketoses. Thus, using hydroxypyruvate as donor and three different aldehydes as acceptors, i.e. glycolaldehyde, D-glyceraldehyde and butyraldehyde, the enzyme stereoselectively forms the corresponding products L-erythrulose, D-xylulose and (3S)-1,3-dihydroxyhexan-2-one, respectively. The protein is Transketolase of Geobacillus stearothermophilus (Bacillus stearothermophilus).